We begin with the raw amino-acid sequence, 608 residues long: UvrABC system protein C (608 aa).

Residues 13 to 91 (HDPGVYRMFD…IKTFQPRYNV (79 aa)) form the GIY-YIG domain. Positions 201-236 (QQVLDHLIAKMETASRALDFENAARFRDQIQAVRAV) constitute a UVR domain.

Belongs to the UvrC family. As to quaternary structure, interacts with UvrB in an incision complex.

The protein localises to the cytoplasm. Its function is as follows. The UvrABC repair system catalyzes the recognition and processing of DNA lesions. UvrC both incises the 5' and 3' sides of the lesion. The N-terminal half is responsible for the 3' incision and the C-terminal half is responsible for the 5' incision. This is UvrABC system protein C from Actinobacillus succinogenes (strain ATCC 55618 / DSM 22257 / CCUG 43843 / 130Z).